The sequence spans 511 residues: Lysine--tRNA ligase (511 aa).

Residues 1 to 20 (MQKNTSQPTNTNEQSNQPSL) are disordered. Residues Glu-422 and Glu-429 each contribute to the Mg(2+) site.

This sequence belongs to the class-II aminoacyl-tRNA synthetase family. As to quaternary structure, homodimer. It depends on Mg(2+) as a cofactor.

Its subcellular location is the cytoplasm. The enzyme catalyses tRNA(Lys) + L-lysine + ATP = L-lysyl-tRNA(Lys) + AMP + diphosphate. The protein is Lysine--tRNA ligase of Chlorobium chlorochromatii (strain CaD3).